Here is a 523-residue protein sequence, read N- to C-terminus: 26S proteasome regulatory subunit RPN3 (523 aa).

Ala-2 carries the post-translational modification N-acetylalanine. The PCI domain occupies 270–450 (ARYFFYLSKI…GFIETTELLN (181 aa)). Ser-454 carries the phosphoserine modification. Basic and acidic residues predominate over residues 480–495 (RYPEDKKTQQNEKSEN). Residues 480-523 (RYPEDKKTQQNEKSENGENDDDTLDGDLMDDMSDISDLDDLGFL) form a disordered region. Acidic residues predominate over residues 496 to 523 (GENDDDTLDGDLMDDMSDISDLDDLGFL).

Belongs to the proteasome subunit S3 family. The 26S proteasome is composed of a core protease, known as the 20S proteasome, capped at one or both ends by the 19S regulatory complex (RC). The RC is composed of at least 18 different subunits in two subcomplexes, the base and the lid, which form the portions proximal and distal to the 20S proteolytic core, respectively. Post-translationally, N-acetylated by NAT1.

Functionally, acts as a regulatory subunit of the 26S proteasome which is involved in the ATP-dependent degradation of ubiquitinated proteins. The protein is 26S proteasome regulatory subunit RPN3 (RPN3) of Saccharomyces cerevisiae (strain ATCC 204508 / S288c) (Baker's yeast).